Reading from the N-terminus, the 243-residue chain is Leucyl/phenylalanyl-tRNA--protein transferase (243 aa).

The protein belongs to the L/F-transferase family.

Its subcellular location is the cytoplasm. It catalyses the reaction N-terminal L-lysyl-[protein] + L-leucyl-tRNA(Leu) = N-terminal L-leucyl-L-lysyl-[protein] + tRNA(Leu) + H(+). It carries out the reaction N-terminal L-arginyl-[protein] + L-leucyl-tRNA(Leu) = N-terminal L-leucyl-L-arginyl-[protein] + tRNA(Leu) + H(+). The enzyme catalyses L-phenylalanyl-tRNA(Phe) + an N-terminal L-alpha-aminoacyl-[protein] = an N-terminal L-phenylalanyl-L-alpha-aminoacyl-[protein] + tRNA(Phe). Its function is as follows. Functions in the N-end rule pathway of protein degradation where it conjugates Leu, Phe and, less efficiently, Met from aminoacyl-tRNAs to the N-termini of proteins containing an N-terminal arginine or lysine. This chain is Leucyl/phenylalanyl-tRNA--protein transferase, found in Vibrio cholerae serotype O1 (strain ATCC 39315 / El Tor Inaba N16961).